Consider the following 169-residue polypeptide: MEIGQYQPNLEGDGLRIGIVQSRFNEPVCNGLADACVEELERLGVSGEDVLLVSVPGALEIPLALQKLAESGQFDALIALGAVIRGETYHFELVSNESGAGITRIGLDFNLPIANAVLTTENDEQAVARMTEKGRDAARVAVEMANLTMALDQLGDDEEEDEDDEEERA.

Residues Phe24, 58–60, and 82–84 contribute to the 5-amino-6-(D-ribitylamino)uracil site; these read ALE and AVI. 87 to 88 contributes to the (2S)-2-hydroxy-3-oxobutyl phosphate binding site; the sequence is ET. His90 (proton donor) is an active-site residue. Asn115 serves as a coordination point for 5-amino-6-(D-ribitylamino)uracil. A (2S)-2-hydroxy-3-oxobutyl phosphate-binding site is contributed by Arg129.

The protein belongs to the DMRL synthase family.

It carries out the reaction (2S)-2-hydroxy-3-oxobutyl phosphate + 5-amino-6-(D-ribitylamino)uracil = 6,7-dimethyl-8-(1-D-ribityl)lumazine + phosphate + 2 H2O + H(+). It participates in cofactor biosynthesis; riboflavin biosynthesis; riboflavin from 2-hydroxy-3-oxobutyl phosphate and 5-amino-6-(D-ribitylamino)uracil: step 1/2. Catalyzes the formation of 6,7-dimethyl-8-ribityllumazine by condensation of 5-amino-6-(D-ribitylamino)uracil with 3,4-dihydroxy-2-butanone 4-phosphate. This is the penultimate step in the biosynthesis of riboflavin. This Burkholderia vietnamiensis (strain G4 / LMG 22486) (Burkholderia cepacia (strain R1808)) protein is 6,7-dimethyl-8-ribityllumazine synthase.